Reading from the N-terminus, the 332-residue chain is Arrestin domain-containing protein 5 (332 aa).

Positions 311-332 (SNQTAAGCRTRAPLPVSPDQQN) are disordered.

Belongs to the arrestin family.

It is found in the membrane. Functionally, plays an essential role in spermatogenesis. May be involved in the anchoring of the sperm head to the tail during spermatogenesis by affecting SEC22A-mediated SUN5 and NDC1 transport and localization. In Bos taurus (Bovine), this protein is Arrestin domain-containing protein 5 (ARRDC5).